The sequence spans 216 residues: MRRAFVERNTNETKISVAIALDKAPLPEESNFIDELITSKHANQKGEQVIQVDTGIGFLDHMYHALAKHAGWSLRLYSRGDLIIDDHHTAEDTAIALGIAFKQAMGNFAGVKRFGHAYCPLDEALSRSVVDLSGRPYAVIDLGLKREKVGELSCEMIPHLLYSFSVAAGITLHVTCLYGSNDHHRAESAFKSLAVAMRAATSLTGSSEVPSTKGVL.

S211 is modified (phosphoserine).

Belongs to the imidazoleglycerol-phosphate dehydratase family.

The catalysed reaction is D-erythro-1-(imidazol-4-yl)glycerol 3-phosphate = 3-(imidazol-4-yl)-2-oxopropyl phosphate + H2O. Its pathway is amino-acid biosynthesis; L-histidine biosynthesis; L-histidine from 5-phospho-alpha-D-ribose 1-diphosphate: step 6/9. The protein is Imidazoleglycerol-phosphate dehydratase (his5) of Schizosaccharomyces pombe (strain 972 / ATCC 24843) (Fission yeast).